Here is a 618-residue protein sequence, read N- to C-terminus: MRSRILAIVFAARHVAALPLAAEDAAATLSLTSSASSTTVLPSPTQYTLPNNDPNQGARNASIARKRELFLYGPSTLGQTTFYPTGELGNNISARDVLLWRQDAANQTATAYREANETFADITSRGGFKTLDDFALLYNGHWKESVPEGISKGMLSNYTSDLLFSMERLSSNPYVLKRLHPTKDKLPFSVESKVVKKLTATTLEALHKGGRLFLVDHSYQKKYTPQPGRYAAACQGLFYLDARSNQFLPLAIKTNVGADLTYTPLDDKNDWLLAKIMFNNNDLFYSQMYHVLFHTIPEIVHEAAFRTLSDRHPVMGVLNRLMYQAYAIRPVGGAVLFNPGGFWDQNFGLPASAAIDFPGSVYAQGGGGFQAGYLEKDLRSRGLVGEDSGPRLPHFPFYEDAHRLIGAIRRFMQAFVDSTYGADDGDDGALLRDYELQNWIAEANGPAQVRDFPAAPLRRRAQLVDVLTHVAWVTGGAHHVMNQGSPVKFSGVVPLHPAALYAPIPTTKGATGNGTRAGLLAWLPNERQAVEQVSLLARFNRAQVGDRKQTVRDAFAAPDLLAGNGPGYAAANARFVEDTGRISREMAGRGFDGKGLSQGMPFVWTALNPAVNPFFLSV.

The N-terminal stretch at 1 to 16 (MRSRILAIVFAARHVA) is a signal peptide. Over residues 36-45 (SSTTVLPSPT) the composition is skewed to low complexity. The interval 36–58 (SSTTVLPSPTQYTLPNNDPNQGA) is disordered. Over residues 46 to 58 (QYTLPNNDPNQGA) the composition is skewed to polar residues. The Lipoxygenase domain occupies 47 to 617 (YTLPNNDPNQ…NPAVNPFFLS (571 aa)). Residues N60, N91, N106, N116, and N157 are each glycosylated (N-linked (GlcNAc...) asparagine). Residues H290, H294, H478, and N482 each coordinate Mn(2+). N513 carries an N-linked (GlcNAc...) asparagine glycan. V618 contributes to the Mn(2+) binding site.

This sequence belongs to the lipoxygenase family. The cofactor is Mn(2+). In terms of processing, N- and O-glycosylated.

The protein localises to the secreted. It carries out the reaction (9Z,12Z)-octadecadienoate + O2 = (11S)-hydroperoxy-(9Z,12Z)-octadecadienoate. The catalysed reaction is (9Z,12Z)-octadecadienoate + O2 = (13R)-hydroperoxy-(9Z,11E)-octadecadienoate. The enzyme catalyses (9Z,12Z,15Z)-octadecatrienoate + O2 = (11S)-hydroperoxy-(9Z,12Z,15Z)-octadecatrienoate. It catalyses the reaction (9Z,12Z,15Z)-octadecatrienoate + O2 = (13R)-hydroperoxy-(9Z,11E,15Z)-octadecatrienoate. Its function is as follows. Lipoxygenase that metabolizes linoleic and alpha-linolenic acids to 11S- and 13R-hydroperoxy fatty acids. At the end of lipoxygenation, the intermediate product 11S-HPODE from linoleic acid is then transformed into 13R-HPODE as the final product. It also acts on alpha-linolenic acid producing 11S-HPOTrE and 13R-HPOTrE with subsequent transformation of 11S-HPOTrE to 13R-HPOTrE as the final product. Gamma-linolenic acid is a poor substrate. Oleate and arachidonate are not substrates. This is Manganese lipoxygenase from Gaeumannomyces tritici (Wheat and barley take-all root rot fungus).